Consider the following 306-residue polypeptide: Deoxyribokinase (306 aa).

Residues 10 to 12 (MVD), 38 to 42 (GKGAN), and glutamate 139 each bind substrate. ATP contacts are provided by residues asparagine 184 and 220 to 225 (TMGEKG). 2 residues coordinate K(+): aspartate 246 and serine 248. Residue 251–252 (GD) coordinates ATP. Substrate is bound at residue aspartate 252. Aspartate 252 acts as the Proton acceptor in catalysis. K(+) is bound by residues serine 282, glycine 285, glycine 287, and serine 291.

Belongs to the carbohydrate kinase PfkB family. Deoxyribokinase subfamily. In terms of assembly, homodimer. The cofactor is Mg(2+).

The protein resides in the cytoplasm. It catalyses the reaction 2-deoxy-D-ribose + ATP = 2-deoxy-D-ribose 5-phosphate + ADP + H(+). Functionally, catalyzes the ATP-dependent phosphorylation of 2-deoxy-D-ribose to 2-deoxy-D-ribose 5-phosphate (dRib-5P), allowing the use of deoxyribose as the sole carbon source. Can also use D-ribose, with much lower efficiency. This Salmonella typhi protein is Deoxyribokinase.